The chain runs to 95 residues: Exodeoxyribonuclease 7 small subunit (95 aa).

It belongs to the XseB family. Heterooligomer composed of large and small subunits.

It is found in the cytoplasm. The enzyme catalyses Exonucleolytic cleavage in either 5'- to 3'- or 3'- to 5'-direction to yield nucleoside 5'-phosphates.. In terms of biological role, bidirectionally degrades single-stranded DNA into large acid-insoluble oligonucleotides, which are then degraded further into small acid-soluble oligonucleotides. This Corynebacterium aurimucosum (strain ATCC 700975 / DSM 44827 / CIP 107346 / CN-1) (Corynebacterium nigricans) protein is Exodeoxyribonuclease 7 small subunit.